Consider the following 99-residue polypeptide: UPF0213 protein RBAM_000440 (99 aa).

The 76-residue stretch at 4-79 (NSHFFYVLLC…KQLTRKKKEQ (76 aa)) folds into the GIY-YIG domain.

Belongs to the UPF0213 family.

The sequence is that of UPF0213 protein RBAM_000440 from Bacillus velezensis (strain DSM 23117 / BGSC 10A6 / LMG 26770 / FZB42) (Bacillus amyloliquefaciens subsp. plantarum).